A 71-amino-acid polypeptide reads, in one-letter code: MDIAQLVDMLSHMAHQAGQAINDKMNGNDLLNPESMIKAQFALQQYSTFINYESSLIKMIKDMLSGIIAKI.

Belongs to the SctF family. The core secretion machinery of the T3SS is composed of approximately 20 different proteins, including cytoplasmic components, a base, an export apparatus and a needle. This subunit polymerizes and forms the helical needle filament.

The protein localises to the secreted. Its subcellular location is the cell surface. Its function is as follows. Component of the type III secretion system (T3SS), also called injectisome, which is used to inject bacterial effector proteins into eukaryotic host cells. SsaG/SctF2 forms the external needle filament that protrudes from the bacterial surface. Functionally, during infection, can induce innate immune responses. The needle proteins interact with host TLR2 or TLR4, and induce signaling by NF-kappa-B and/or AP-1. This activation is MyD88 dependent and results in increased expression of cytokines, including TNF-alpha, IL-6 and IL-8. The sequence is that of SPI-2 type 3 secretion system needle filament protein from Salmonella typhimurium (strain LT2 / SGSC1412 / ATCC 700720).